Here is a 172-residue protein sequence, read N- to C-terminus: 3-phenylpropionate/cinnamic acid dioxygenase subunit beta (172 aa).

It belongs to the bacterial ring-hydroxylating dioxygenase beta subunit family. In terms of assembly, this dioxygenase system consists of four proteins: the two subunits of the hydroxylase component (HcaE and HcaF), a ferredoxin (HcaC) and a ferredoxin reductase (HcaD).

It catalyses the reaction 3-phenylpropanoate + NADH + O2 + H(+) = 3-(cis-5,6-dihydroxycyclohexa-1,3-dien-1-yl)propanoate + NAD(+). The catalysed reaction is (E)-cinnamate + NADH + O2 + H(+) = (2E)-3-(cis-5,6-dihydroxycyclohexa-1,3-dien-1-yl)prop-2-enoate + NAD(+). The protein operates within aromatic compound metabolism; 3-phenylpropanoate degradation. Functionally, part of the multicomponent 3-phenylpropionate dioxygenase. Converts 3-phenylpropionic acid (PP) and cinnamic acid (CI) into 3-phenylpropionate-dihydrodiol (PP-dihydrodiol) and cinnamic acid-dihydrodiol (CI-dihydrodiol), respectively. The chain is 3-phenylpropionate/cinnamic acid dioxygenase subunit beta from Shigella flexneri serotype 5b (strain 8401).